Here is a 146-residue protein sequence, read N- to C-terminus: Hemoglobin subunit beta/beta' (146 aa).

Positions 2-146 constitute a Globin domain; it reads HWSAEEKQLI…VAHALARKYH (145 aa). Positions 63 and 92 each coordinate heme b.

It belongs to the globin family. In terms of assembly, heterotetramer of two alpha chains and two beta chains. Red blood cells.

Functionally, involved in oxygen transport from the lung to the various peripheral tissues. In Chroicocephalus ridibundus (Black-headed gull), this protein is Hemoglobin subunit beta/beta' (HBB).